A 435-amino-acid chain; its full sequence is Serine--tRNA ligase (435 aa).

Residue T234–E236 coordinates L-serine. R265–E267 lines the ATP pocket. E288 is a binding site for L-serine. E352 to S355 contacts ATP. Residue S388 coordinates L-serine.

Belongs to the class-II aminoacyl-tRNA synthetase family. Type-1 seryl-tRNA synthetase subfamily. As to quaternary structure, homodimer. The tRNA molecule binds across the dimer.

It is found in the cytoplasm. It carries out the reaction tRNA(Ser) + L-serine + ATP = L-seryl-tRNA(Ser) + AMP + diphosphate + H(+). It catalyses the reaction tRNA(Sec) + L-serine + ATP = L-seryl-tRNA(Sec) + AMP + diphosphate + H(+). It participates in aminoacyl-tRNA biosynthesis; selenocysteinyl-tRNA(Sec) biosynthesis; L-seryl-tRNA(Sec) from L-serine and tRNA(Sec): step 1/1. Its function is as follows. Catalyzes the attachment of serine to tRNA(Ser). Is also able to aminoacylate tRNA(Sec) with serine, to form the misacylated tRNA L-seryl-tRNA(Sec), which will be further converted into selenocysteinyl-tRNA(Sec). The polypeptide is Serine--tRNA ligase (Synechococcus sp. (strain JA-3-3Ab) (Cyanobacteria bacterium Yellowstone A-Prime)).